We begin with the raw amino-acid sequence, 646 residues long: MPDPATYRPAPGSIPVEPGVYRFRDQHGRVIYVGKAKSLRSRLTSYFADVASLAPRTRQLVTTAAKVEWTVVGTEVEALQLEYTWIKEFDPRFNVRYRDDKSYPVLAVTLGEEFPRLMVYRGPRRKGVRYFGPYSHAWAIRETLDLLTRVFPARTCSAGVFKRHRQIDRPCLLGYIDKCSAPCIGRVDAAQHRQIVADFCDFLSGKTDRFARALEQQMNAAAEQLDFERAARLRDDLSALKRAMEKQAVVLGDGTDADVVAFADDELEAAVQVFHVRGGRVRGQRGWIVEKPGEPGDSGIQLVEQFLTQFYGDQAALDDAADESANPVPREVLVPCLPSNAEELASWLSGLRGSRVVLRVPRRGDKRALAETVHRNAEDALQQHKLKRASDFNARSAALQSIQDSLGLADAPLRIECVDVSHVQGTDVVGSLVVFEDGLPRKSDYRHFGIREAAGQGRSDDVACIAEVTRRRFLRHLRDQSDPDLLSPERKSRRFAYPPNLYVVDGGAPQVNAASAVIDELGVTDVAVIGLAKRLEEVWVPSEPDPIIMPRNSEGLYLLQRVRDEAHRFAITYHRSKRSTRMTASALDSVPGLGEHRRKALVTHFGSIARLKEATVDEITAVPGIGVATATAVHDALRPDSSGAAR.

The 80-residue stretch at 16–95 (VEPGVYRFRD…IKEFDPRFNV (80 aa)) folds into the GIY-YIG domain. The region spanning 208-243 (DRFARALEQQMNAAAEQLDFERAARLRDDLSALKRA) is the UVR domain.

Belongs to the UvrC family. In terms of assembly, interacts with UvrB in an incision complex.

It is found in the cytoplasm. Functionally, the UvrABC repair system catalyzes the recognition and processing of DNA lesions. UvrC both incises the 5' and 3' sides of the lesion. The N-terminal half is responsible for the 3' incision and the C-terminal half is responsible for the 5' incision. The chain is UvrABC system protein C from Mycobacterium bovis (strain BCG / Pasteur 1173P2).